Here is a 463-residue protein sequence, read N- to C-terminus: Probable mannan endo-1,4-beta-mannosidase F (463 aa).

A signal peptide spans 1-18 (MRSLSSIALLSVVGAASA). The CBM1 domain occupies 19–54 (QAGPWAQCGGKSFSGSSECASGWKCQELNEWFSQCV). Residues 57 to 78 (AESTTPTVSSTPTPTDAPSVSI) are disordered. Low complexity predominate over residues 59-77 (STTPTVSSTPTPTDAPSVS). Residues 75–118 (SVSITASVTTGINKSISVSSASKSTPLPSSSSASPSPRPTGSGS) are ser-rich linker. N-linked (GlcNAc...) asparagine glycosylation is present at asparagine 87. The segment covering 93 to 118 (SSASKSTPLPSSSSASPSPRPTGSGS) has biased composition (low complexity). The disordered stretch occupies residues 93–121 (SSASKSTPLPSSSSASPSPRPTGSGSFAK). The catalytic stretch occupies residues 119-463 (FAKADGLQFS…MDHMENVNKN (345 aa)). Tryptophan 171 and asparagine 285 together coordinate substrate. Catalysis depends on glutamate 286, which acts as the Proton donor/acceptor. Tyrosine 361 is a substrate binding site. Catalysis depends on glutamate 395, which acts as the Nucleophile. Tryptophan 424 serves as a coordination point for substrate.

Belongs to the glycosyl hydrolase 5 (cellulase A) family.

It localises to the secreted. It carries out the reaction Random hydrolysis of (1-&gt;4)-beta-D-mannosidic linkages in mannans, galactomannans and glucomannans.. Its function is as follows. Endo-1,4-mannanase, a crucial enzyme for depolymerization of seed galactomannans and wood galactoglucomannans. The protein is Probable mannan endo-1,4-beta-mannosidase F (manF) of Aspergillus oryzae (strain ATCC 42149 / RIB 40) (Yellow koji mold).